The primary structure comprises 378 residues: Metacaspase-1B (378 aa).

The tract at residues 1 to 70 (MCSPPPYPPQ…QEAQSFGGGA (70 aa)) is disordered. Residues 10 to 29 (QGHHYPPSPHGSYYSPTPYG) are compositionally biased toward low complexity. Active-site residues include His-169 and Cys-225.

It belongs to the peptidase C14B family.

Its function is as follows. Involved in cell death (apoptosis). This chain is Metacaspase-1B (casB), found in Aspergillus terreus (strain NIH 2624 / FGSC A1156).